Reading from the N-terminus, the 474-residue chain is Receptor-transporting protein 3 (474 aa).

Residues 1–453 (MMEEDIGDTE…SCCEAACNCM (453 aa)) are Cytoplasmic-facing. A 3CxxC-type zinc finger spans residues 53–164 (TFARFHCPSC…SSNCEACLLG (112 aa)). Residues 175-304 (SKPPAPPLSP…ISCTSKPSTT (130 aa)) form a disordered region. Composition is skewed to polar residues over residues 197-228 (VTCS…NPTK) and 259-304 (VTCS…PSTT). A helical membrane pass occupies residues 454-474 (SQSPLCCLAFLILFLLLWYLL).

It belongs to the TMEM7 family. Interacts with TAS2R16. Expressed predominantly in the liver. Not detected in the olfactory epithelium.

The protein resides in the membrane. Functionally, promotes functional cell surface expression of the bitter taste receptors TAS2R16 and TAS2R43. The chain is Receptor-transporting protein 3 (Rtp3) from Mus musculus (Mouse).